We begin with the raw amino-acid sequence, 466 residues long: Methylenomycin A resistance protein (466 aa).

14 helical membrane-spanning segments follow: residues 16 to 36 (ISVLIVLALGFLMATLDVTVV), 56 to 76 (WVVDGYILTFASLLLAGGALA), 83 to 103 (TIYILGLAVFVMASCLCAASI), 113 to 133 (LIQGIGAALFMPSSLSLLAAS), 146 to 166 (LWAALVSAASALGPFIGGVLV), 168 to 188 (LAGWQSIFLINVPIGAAALIS), 203 to 223 (VNIIGHLLGMMALGFLSYALI), 234 to 254 (VILVAFTAAVLAFVLFLLREI), 276 to 296 (FIGFLLNFALFGGMFMLSLFL), 305 to 325 (FMAGVELLPMMAVFVIGNLLF), 337 to 357 (LMFVSMAVSCIIALLLFVLIS), 367 to 387 (VLMSVMNLCTGITVPAMTTVI), 409 to 429 (IGALVGVAITGVIIHLSATWY), and 434 to 454 (FAFLMMGAAYSLAALLVWLFL).

The protein belongs to the major facilitator superfamily. EmrB family.

It localises to the cell membrane. Functionally, resistance to the epoxide antibiotic methylenomycin. In Bacillus subtilis (strain 168), this protein is Methylenomycin A resistance protein (mmr).